Reading from the N-terminus, the 86-residue chain is Kappa-theraphotoxin-Cg1a 5 (86 aa).

Positions 1 to 21 (MKVSVLITLAVLGVMFVWTSA) are cleaved as a signal peptide. Positions 22-50 (AELEERGSDQRDSPAWLKSMERIFQSEER) are excised as a propeptide. Disulfide bonds link cysteine 52/cysteine 66, cysteine 59/cysteine 71, and cysteine 65/cysteine 78. At phenylalanine 84 the chain carries Phenylalanine amide.

Belongs to the neurotoxin 10 (Hwtx-1) family. 28 (Jztx-11) subfamily. In terms of tissue distribution, expressed by the venom gland.

It is found in the secreted. In terms of biological role, this toxin acts as a voltage-dependent gating-modifier. It inhibits the sodium conductance (IC(50)=124 nM) and slows the fast inactivation (EC(50)=1180 nM) of Nav1.5/SCN5A. It significantly shifts the activation to more depolarized voltages and decreases the deactivation of Nav1.5 currents upon extreme depolarization, but only slightly affects voltage-dependence of steady-state inactivation. In addition, this toxin causes an approximately five-fold decrease in the rate of recovery from inactivation and an approximately 1.9-fold reduction in the closed-state inactivation rate. This toxin integrates the functions of site 3 toxins (alpha-scorpion toxins) with site 4 toxins (beta-scorpion and spider toxins) by targeting multiple sites on Nav1.5. Also shows inhibition of voltage-gated potassium channels (5 uM completely inhibits Kv2.1/KCNB1, whereas 5 uM moderately inhibits Kv4.2/KCND2 Kv4.1/KCND1 channels). The protein is Kappa-theraphotoxin-Cg1a 5 of Chilobrachys guangxiensis (Chinese earth tiger tarantula).